A 955-amino-acid polypeptide reads, in one-letter code: MAM domain-containing glycosylphosphatidylinositol anchor protein 1 (955 aa).

An N-terminal signal peptide occupies residues 1-18 (MEVTCLLLLALIPFHCRG). Ig-like domains lie at 24–123 (PAQA…KSIR) and 132–230 (PMLT…KAIT). N-linked (GlcNAc...) asparagine glycans are attached at residues Asn-42 and Asn-90. 2 disulfide bridges follow: Cys-60–Cys-108 and Cys-157–Cys-214. N-linked (GlcNAc...) asparagine glycosylation is found at Asn-235, Asn-247, Asn-257, Asn-307, and Asn-331. Residues 240–323 (PALKLSVNET…VGNPAKKTVN (84 aa)) enclose the Ig-like 3 domain. A disulfide bridge links Cys-262 with Cys-308. 3 consecutive Ig-like domains span residues 338 to 432 (PDVI…VEVN), 440 to 532 (PTIS…AQVQ), and 539 to 631 (PEVE…FQVS). Cys-357 and Cys-415 are joined by a disulfide. A glycan (N-linked (GlcNAc...) asparagine) is linked at Asn-432. Cystine bridges form between Cys-463–Cys-514 and Cys-560–Cys-615. Residues 643–743 (TPNPTRSHKL…SRIIHYTEPI (101 aa)) form the Fibronectin type-III domain. N-linked (GlcNAc...) asparagine glycans are attached at residues Asn-655 and Asn-747. An MAM domain is found at 751 to 918 (NTCHFEDEKI…VTLKKGECPR (168 aa)). A compositionally biased stretch (polar residues) spans 779–788 (LTQNPKRSPN). The segment at 779-798 (LTQNPKRSPNTGPPTDISGT) is disordered. N-linked (GlcNAc...) asparagine glycosylation occurs at Asn-826. Ser-932 carries GPI-anchor amidated serine lipidation. Residues 933-955 (GAPCQSSPQLWGPMAIFLLALQR) constitute a propeptide, removed in mature form.

Interacts heterophilically through its MAM domain with proteins in axon-rich regions and through its Ig-like domains with proteins in differentiating muscle. Interacts (through the Ig-like domains) with NLGN2. Has been found in brain, heart, skeletal muscle and kidney. Found to be overexpressed in tumor tissues.

The protein resides in the cell membrane. Its function is as follows. Required for radial migration of cortical neurons in the superficial layer of the neocortex. Plays a role in the formation or maintenance of inhibitory synapses. May function by inhibiting the activity of NLGN2. The polypeptide is MAM domain-containing glycosylphosphatidylinositol anchor protein 1 (MDGA1) (Homo sapiens (Human)).